A 557-amino-acid chain; its full sequence is Transmembrane protein 209 (557 aa).

Residues Val28 to Thr48 form a helical membrane-spanning segment. The N-linked (GlcNAc...) asparagine glycan is linked to Asn57. A helical transmembrane segment spans residues Tyr60–Phe80. Disordered regions lie at residues Pro108–Pro156 and Tyr194–Glu232. The segment covering Val125–Leu140 has biased composition (polar residues). Composition is skewed to low complexity over residues Ser141–Pro156, Tyr194–Ser205, and Arg219–Pro228. Residues Asn273 and Asn343 are each glycosylated (N-linked (GlcNAc...) asparagine).

The protein resides in the membrane. It is found in the nucleus envelope. Its subcellular location is the golgi apparatus. It localises to the cytoplasm. In Xenopus tropicalis (Western clawed frog), this protein is Transmembrane protein 209 (tmem209).